The following is a 907-amino-acid chain: Aldehyde oxidoreductase (907 aa).

Residues 2–79 (IQKVITVNGI…GAQITTIEGV (78 aa)) form the 2Fe-2S ferredoxin-type domain. Residues C40, C45, C48, C60, C100, C103, C137, and C139 each contribute to the [2Fe-2S] cluster site. H653 and E869 together coordinate Mo-molybdopterin cytosine dinucleotide.

This sequence belongs to the xanthine dehydrogenase family. In terms of assembly, homodimer. It depends on Mo-molybdopterin cytosine dinucleotide as a cofactor. [2Fe-2S] cluster serves as cofactor.

The enzyme catalyses an aldehyde + A + H2O = a carboxylate + AH2 + H(+). In Megalodesulfovibrio gigas (Desulfovibrio gigas), this protein is Aldehyde oxidoreductase (mop).